The chain runs to 381 residues: 5-cytosine rRNA methyltransferase NSUN4 (381 aa).

Residues 1–25 (MAAPVLRCVRKLLKLVDFTPVPRRY) constitute a mitochondrion transit peptide. Residues G182, G183, K184, and D201 each coordinate S-adenosyl-L-methionine. S203 is modified (phosphoserine). The S-adenosyl-L-methionine site is built by R206, D234, G235, and D252. C307 (nucleophile) is an active-site residue.

The protein belongs to the class I-like SAM-binding methyltransferase superfamily. RsmB/NOP family. Heterodimer with MTERFD2/MTERF4; this interaction seems to be required for NSUN4 recruitment to the mitochondrial large ribosomal subunit.

The protein resides in the mitochondrion. It catalyses the reaction a cytidine in rRNA + S-adenosyl-L-methionine = a 5-methylcytidine in rRNA + S-adenosyl-L-homocysteine + H(+). The enzyme catalyses a cytidine in mRNA + S-adenosyl-L-methionine = a 5-methylcytidine in mRNA + S-adenosyl-L-homocysteine + H(+). Mitochondrial RNA cytosine C(5)-methyltransferase that methylates cytosine to 5-methylcytosine (m5C) in various RNAs, such as rRNAs, mRNAs and some long non-coding RNAs (lncRNAs). Involved in mitochondrial ribosome small subunit (SSU) maturation by catalyzing methylation of mitochondrial 12S rRNA; the function is independent of MTERFD2/MTERF4 and assembled mitochondrial ribosome large subunit (LSU). Targeted to LSU by MTERFD2/MTERF4 and probably is involved in a final step in ribosome biogenesis to ensure that SSU and LSU are assembled. In vitro can methylate 16S rRNA of the LSU; the methylation is enhanced by MTERFD/MTERF4. Also acts as a regulator of innate immunity by marking double-stranded mitochondrial RNAs(mt-dsRNAs) generated in response to stress: catalyzes m5C modification on mitochondrial RNAs, such as a mRNAs and lncRNAs, with a preference for the termini of light-strand lncRNAs, promoting their degradation and cytosolic release. Modified light-strand lncRNAs are then recognized by C1QBP reader and recruited to the mitochondrial degradosome complex, which promotes their degradation. In Mus musculus (Mouse), this protein is 5-cytosine rRNA methyltransferase NSUN4.